We begin with the raw amino-acid sequence, 471 residues long: 5-hydroxytryptamine receptor 2A (471 aa).

The Extracellular portion of the chain corresponds to 1 to 80; sequence MDILCEENTS…LQEKNWSALL (80 aa). Asn-8, Asn-38, Asn-44, Asn-51, and Asn-54 each carry an N-linked (GlcNAc...) asparagine glycan. Residues 81–97 traverse the membrane as a helical segment; sequence TAVVIILTIAGNILVIM. Topologically, residues 98–111 are cytoplasmic; the sequence is AVSLEKKLQNATNY. Residues 112 to 137 traverse the membrane as a helical segment; sequence FLMSLAIADMLLGFLVMPVSMLTILY. Residues 138 to 146 are Extracellular-facing; it reads GYRWPLPSK. The chain crosses the membrane as a helical span at residues 147–171; the sequence is LCAVWIYLDVLFSTASIMHLCAISL. Cys-148 and Cys-227 are oxidised to a cystine. Asp-155 contributes to the serotonin binding site. The DRY motif; important for ligand-induced conformation changes signature appears at 172–174; the sequence is DRY. Residues 172–191 are Cytoplasmic-facing; it reads DRYVAIQNPIHHSRFNSRTK. Residues 192 to 215 form a helical membrane-spanning segment; the sequence is AFLKIIAVWTISVGISMPIPVFGL. The Extracellular segment spans residues 216–232; that stretch reads QDDSKVFKEGSCLLADD. The chain crosses the membrane as a helical span at residues 233–258; the sequence is NFVLIGSFVSFFIPLTIMVITYFLTI. Residues 259–322 are Cytoplasmic-facing; the sequence is KSLQKEATLC…QSISNEQKAC (64 aa). A Phosphoserine modification is found at Ser-280. A helical transmembrane segment spans residues 323 to 348; that stretch reads KVLGIVFFLFVVMWCPFFITNIMAVI. Asn-343 provides a ligand contact to serotonin. Cys-349 and Cys-353 are joined by a disulfide. Topologically, residues 349-356 are extracellular; it reads CKESCNED. A helical transmembrane segment spans residues 357-382; it reads VIGALLNVFVWIGYLSSAVNPLVYTL. The short motif at 376-380 is the NPxxY motif; important for ligand-induced conformation changes and signaling element; the sequence is NPLVY. The Cytoplasmic segment spans residues 383-471; sequence FNKTYRSAFS…DGVNEKVSCV (89 aa). Over residues 451–465 the composition is skewed to basic and acidic residues; the sequence is QHSEEASKDNSDGVN. The segment at 451–471 is disordered; the sequence is QHSEEASKDNSDGVNEKVSCV. The PDZ-binding motif lies at 469–471; it reads SCV.

It belongs to the G-protein coupled receptor 1 family. Interacts (via C-terminus) with MPDZ and PATJ. May interact (via C-terminus) with MPP3, PRDX6, DLG4, DLG1, CASK, APBA1 and MAGI2. Interacts with GRM2 and DRD2; this may affect signaling. As to expression, detected in brain cortex (at protein level). Detected in blood platelets.

The protein resides in the cell membrane. Its subcellular location is the cell projection. It localises to the dendrite. The protein localises to the axon. It is found in the cytoplasmic vesicle. The protein resides in the membrane. Its subcellular location is the caveola. It localises to the presynapse. Its activity is regulated as follows. G-protein coupled receptor activity is regulated by lipids: oleamide increases HTR2A-mediated activity. Inhibited by IHCH-7179 small molecule: IHCH-7179 acts both as an agonist activator for HTR1A and as an antagonist inhibitor for HTR2A. G-protein coupled receptor for 5-hydroxytryptamine (serotonin). Also functions as a receptor for various drugs and psychoactive substances, including mescaline, psilocybin, 1-(2,5-dimethoxy-4-iodophenyl)-2-aminopropane (DOI) and lysergic acid diethylamide (LSD). Ligand binding causes a conformation change that triggers signaling via guanine nucleotide-binding proteins (G proteins) and modulates the activity of downstream effectors. HTR2A is coupled to G(q)/G(11) G alpha proteins and activates phospholipase C-beta, releasing diacylglycerol (DAG) and inositol 1,4,5-trisphosphate (IP3) second messengers that modulate the activity of phosphatidylinositol 3-kinase and promote the release of Ca(2+) ions from intracellular stores, respectively. Beta-arrestin family members inhibit signaling via G proteins and mediate activation of alternative signaling pathways. Affects neural activity, perception, cognition and mood. Plays a role in the regulation of behavior, including responses to anxiogenic situations and psychoactive substances. Plays a role in intestinal smooth muscle contraction, and may play a role in arterial vasoconstriction. In terms of biological role, (Microbial infection) Acts as a receptor for human JC polyomavirus/JCPyV. The protein is 5-hydroxytryptamine receptor 2A of Homo sapiens (Human).